The following is a 966-amino-acid chain: MTSCVLAGSIETTPKVSPGDSEAKPLIFTFVPTLRRLPTHIQLADTSKFLVKIPEEPTDKNPETVNRFEYSDHMTFSCESKEERDQRILDYPSEVSGKNSQRKEFNTKEPQGMQKGDLFKAEYVFIVDSDGEDEATCRQGEQGPPGATGNIATRPKSLAISSSLASDVVRPKVRGVDVKVSSHPEIPHGIAPQQKHGQLTSPTTSEQLAHKPPAFSFVSPTNQKTPPVPAKVSGTTVLEEFHIRRLDVHGASEEETATYFHTTAHDSPLPAWKGASTLVFSPSAQLPGSSLCGSNVADHTRGLAPEAQKKVSTSSALNPREDVRTSPSPASGASLRSPSASYIPVRIVMHSLSPSPKPLTSSSHGSLSTVCSQTSSSGNLSKSGLKSPVPSRLSLLTAILKSNPSHQRPLSPASCPTFSLNSLASSTLTLDQKIKQTPSTPKKSLSSCSLTTGSTEQEQASAESHQPCHLSFFSKTTPLSQAQPPSPPALASSSYAATDTEKIPGSTLRSSTTPPQSQTDLFSLADVPSVTPGLSPLSSSKGRKDGDLRAPEKNRNICTRPSTLSFIPPINESTALSSSGKCFHPSPALSDLIDRSKRTCSQRHSDQRPNPSALPTPPVSRAGSASHPHLGYSILPPESSLTQALQRSPSALHPSCGSATCPSRTGMPDSTASNRSSRVSTPSLPVSLTRTKELISPCALSMSAGPENKKPKQYKTKSSYKAFAAIPTNTLLLEQKALDEPARTESNSKASVSDLPVELCFPAQLRQQTEELCATIDKVLQDSLSMHSSDSPSRPSQTMLGSETIKTPTTHPRAAGRETKYANLSSSSSTTSESQLTKPGVIRPVPIKSKLFLKKEEEVYEPNPFSKYLEDSSGLFSEQDMAIPHKPVSLHPLYQSKLYPPAKSLLRPQTLSHADCLTPGPFSHLSSFSLRDEQEKSPTLLSQDTYNKPGHPMVTIPEHDTLDSKE.

Position 129 is a phosphoserine (S129). Disordered regions lie at residues 132–154, 182–207, 303–337, 354–388, 434–562, 597–684, 785–837, and 929–966; these read EDEA…IATR, SHPE…TSEQ, LAPE…SLRS, PSPK…LKSP, IKQT…TRPS, KRTC…TPSL, SMHS…SQLT, and SLRD…DSKE. Positions 144-810 are required for interaction with ISL1; it reads PPGATGNIAT…GSETIKTPTT (667 aa). 2 stretches are compositionally biased toward polar residues: residues 195–207 and 325–337; these read KHGQ…TSEQ and TSPS…SLRS. Composition is skewed to low complexity over residues 354–387, 437–455, and 478–497; these read PSPK…GLKS, TPST…TGST, and PLSQ…SYAA. S486 bears the Phosphoserine mark. The span at 507–521 shows a compositional bias: polar residues; sequence TLRSSTTPPQSQTDL. Basic and acidic residues-rich tracts occupy residues 542–555 and 597–607; these read GRKD…EKNR and KRTCSQRHSDQ. Polar residues-rich tracts occupy residues 639-649 and 657-684; these read SSLTQALQRSP and GSAT…TPSL. A compositionally biased stretch (low complexity) spans 785–797; it reads SMHSSDSPSRPSQ. Position 791 is a phosphoserine (S791). The segment covering 798-810 has biased composition (polar residues); it reads TMLGSETIKTPTT. The span at 825 to 834 shows a compositional bias: low complexity; the sequence is SSSSSTTSES. Residues 937-946 are compositionally biased toward polar residues; it reads SPTLLSQDTY. Basic and acidic residues predominate over residues 957 to 966; that stretch reads PEHDTLDSKE.

As to quaternary structure, directly interacts with LMNA. Interacts with ISL1 (via N-terminal domain); the interaction represses ISL1 transactivator activity. Interactions of ISL1 with MLIP1 and GCN5/KAT2A may be mutually exclusive. In terms of tissue distribution, expressed in cardiomyoctes. Expression is highly reduced in hypertrophic cardiomyocytes.

The protein resides in the nucleus. It localises to the nucleus envelope. It is found in the PML body. The protein localises to the cytoplasm. Its subcellular location is the cytosol. The protein resides in the cell membrane. It localises to the sarcolemma. Functionally, required for myoblast differentiation into myotubes, possibly acting as a transcriptional regulator of the myogenic program. Required for cardiac adaptation to stress through integrated regulation of the AKT/mTOR pathways and FOXO1. Regulates cardiac homeostasis and plays a role in the protection against cardiac hypertrophy. Binds chromatin. May act as a transcriptional cofactor for ISL1, repressing its transcriptional activity. May also repress MYOCD transcriptional activity. This is Muscular LMNA-interacting protein from Rattus norvegicus (Rat).